Here is a 163-residue protein sequence, read N- to C-terminus: D-aminoacyl-tRNA deacylase (163 aa).

The Gly-cisPro motif, important for rejection of L-amino acids signature appears at 141-142 (GP).

This sequence belongs to the DTD family. In terms of assembly, homodimer.

It is found in the cytoplasm. It carries out the reaction glycyl-tRNA(Ala) + H2O = tRNA(Ala) + glycine + H(+). It catalyses the reaction a D-aminoacyl-tRNA + H2O = a tRNA + a D-alpha-amino acid + H(+). In terms of biological role, an aminoacyl-tRNA editing enzyme that deacylates mischarged D-aminoacyl-tRNAs. Also deacylates mischarged glycyl-tRNA(Ala), protecting cells against glycine mischarging by AlaRS. Acts via tRNA-based rather than protein-based catalysis; rejects L-amino acids rather than detecting D-amino acids in the active site. By recycling D-aminoacyl-tRNA to D-amino acids and free tRNA molecules, this enzyme counteracts the toxicity associated with the formation of D-aminoacyl-tRNA entities in vivo and helps enforce protein L-homochirality. The polypeptide is D-aminoacyl-tRNA deacylase (Neisseria gonorrhoeae (strain ATCC 700825 / FA 1090)).